Consider the following 340-residue polypeptide: Protein-arginine kinase (340 aa).

The region spanning 21-242 (VVLSSRIRLA…EQIIMQERVA (222 aa)) is the Phosphagen kinase C-terminal domain. ATP-binding positions include 24-28 (SSRIR), H79, R113, 164-168 (RASVM), and 195-200 (RGIYGE).

The protein belongs to the ATP:guanido phosphotransferase family.

The catalysed reaction is L-arginyl-[protein] + ATP = N(omega)-phospho-L-arginyl-[protein] + ADP + H(+). Functionally, catalyzes the specific phosphorylation of arginine residues in proteins. This chain is Protein-arginine kinase, found in Listeria monocytogenes serovar 1/2a (strain ATCC BAA-679 / EGD-e).